The chain runs to 653 residues: 2-oxoglutarate oxidoreductase subunit KorA (653 aa).

Positions 1–21 are disordered; sequence MDPNGSGAGPESHDAAFHAAP. Basic and acidic residues predominate over residues 11 to 21; the sequence is ESHDAAFHAAP.

KG oxidoreductase (KOR) is composed of KorA and KorB subunits.

It catalyses the reaction 2 oxidized [2Fe-2S]-[ferredoxin] + 2-oxoglutarate + CoA = succinyl-CoA + 2 reduced [2Fe-2S]-[ferredoxin] + CO2 + H(+). It functions in the pathway carbohydrate metabolism; tricarboxylic acid cycle. Functionally, component of KG oxidoreductase (KOR) that catalyzes the CoA-dependent oxidative decarboxylation of 2-oxoglutarate (alpha-ketoglutarate, KG) to succinyl-CoA. Methyl viologen can act as electron acceptor in vitro; the physiologic electron acceptor is unknown. Is involved in the alternative TCA pathway that functions concurrently with fatty acid beta-oxidation. Since a growing body of evidence indicates that lipids (for example cholesterol and fatty acids) are a predominant growth substrate for M.tuberculosis during infection, flux through KOR likely represents an important step in intermediary metabolism in vivo. KOR-dependent decarboxylation of KG also appears to be an important source of CO(2) in M.tuberculosis metabolism. The sequence is that of 2-oxoglutarate oxidoreductase subunit KorA (korA) from Mycobacterium tuberculosis (strain ATCC 25618 / H37Rv).